We begin with the raw amino-acid sequence, 188 residues long: dCTP deaminase (188 aa).

DCTP-binding positions include 111–116 (KSTYAR), 135–137 (TLE), Gln156, Tyr170, and Gln180. The active-site Proton donor/acceptor is the Glu137.

It belongs to the dCTP deaminase family. Homotrimer.

It carries out the reaction dCTP + H2O + H(+) = dUTP + NH4(+). It functions in the pathway pyrimidine metabolism; dUMP biosynthesis; dUMP from dCTP (dUTP route): step 1/2. Catalyzes the deamination of dCTP to dUTP. The sequence is that of dCTP deaminase from Cupriavidus taiwanensis (strain DSM 17343 / BCRC 17206 / CCUG 44338 / CIP 107171 / LMG 19424 / R1) (Ralstonia taiwanensis (strain LMG 19424)).